Here is a 1388-residue protein sequence, read N- to C-terminus: Putative ATP-dependent RNA helicase DHX57 (1388 aa).

Basic residues predominate over residues 1–11; sequence MSSSVRRKGKP. 2 disordered regions span residues 1–107 and 121–154; these read MSSS…MTSE and EQGADAGSERGTSGEEEDSEPQCGEEQGWPAGQE. Over residues 34-51 the composition is skewed to gly residues; it reads HGGGGGGGGSCGGGGGGS. The span at 79 to 89 shows a compositional bias: basic and acidic residues; it reads DSNKSKGETRP. Phosphoserine occurs at positions 128 and 133. One can recognise a UBA domain in the interval 175-220; sequence PVPECAVSPLAVQKLSRYGFHTEHCQLALRICDGDLGAALEHLLRQ. Residues 299–326 form a C3H1-type zinc finger; it reads DTSPETCKFYLKGNCKFGSKCKFKHEVP. Phosphoserine is present on Ser-475. The Helicase ATP-binding domain maps to 555–722; the sequence is LKLLSKHQVV…FSYCPVITIP (168 aa). 568–575 is a binding site for ATP; that stretch reads GMTGCGKT. Residues 669 to 672 carry the DEVH box motif; it reads DEVH. In terms of domain architecture, Helicase C-terminal spans 832-1012; it reads LIEALLEWIV…QLCLRIKILE (181 aa).

The protein belongs to the DEAD box helicase family. DEAH subfamily.

It carries out the reaction ATP + H2O = ADP + phosphate + H(+). Its function is as follows. Probable ATP-binding RNA helicase. The polypeptide is Putative ATP-dependent RNA helicase DHX57 (Dhx57) (Mus musculus (Mouse)).